Here is a 520-residue protein sequence, read N- to C-terminus: Cyclic AMP-responsive element-binding protein 3-like protein 2 (520 aa).

Topologically, residues 1–378 are cytoplasmic; it reads MEVLESGEQG…CKLAGTQTGT (378 aa). S93 carries the phosphoserine modification. A Glycyl lysine isopeptide (Lys-Gly) (interchain with G-Cter in SUMO2) cross-link involves residue K178. S191 carries the post-translational modification Phosphoserine. The disordered stretch occupies residues 195 to 264; the sequence is APVDHLHLPP…PHKLQGSGPL (70 aa). 2 stretches are compositionally biased toward low complexity: residues 208–220 and 234–255; these read SSHGSDSEGSLSP and SPSRAAPRAPSALSSSPLLTAP. A bZIP domain is found at 294 to 357; sequence ALKKIRRKIK…RTLLQQLQKL (64 aa). The segment at 296–325 is basic motif; that stretch reads KKIRRKIKNKISAQESRRKKKEYMDSLEKK. The leucine-zipper stretch occupies residues 336 to 357; the sequence is LRKKVEVLENTNRTLLQQLQKL. Residues 379–399 traverse the membrane as a helical; Signal-anchor for type II membrane protein segment; that stretch reads CLMVVVLCFAVAFGSFFQGYG. Residues 400–520 lie on the Lumenal side of the membrane; sequence PYPSATKMAL…ELDRRVNTTF (121 aa). The short motif at 427–430 is the S1P recognition element; the sequence is RNLL. N480, N504, and N517 each carry an N-linked (GlcNAc...) asparagine glycan.

Belongs to the bZIP family. ATF subfamily. Binds DNA as a dimer. In terms of processing, upon ER stress, translocated to the Golgi apparatus, where it is processed by regulated intramembrane proteolysis (RIP) to release the cytosol-facing N-terminal transcription factor domain. The cleavage is performed sequentially by site-1 and site-2 proteases (S1P/MBTPS1 and S2P/MBTPS2). N-glycosylated. Post-translationally, ubiquitinated by HRD1/SYVN1; undergoes 'Lys-48'-linked ubiquitination, followed by rapid proteasomal degradation under normal conditions. Upon ER stress, SYVN1 E3 ubiquitin-protein ligase dissociates from its substrate, ubiquitination does not occur and CREB3L2 is stabilized.

It is found in the endoplasmic reticulum membrane. It localises to the nucleus. In terms of biological role, transcription factor involved in unfolded protein response (UPR). In the absence of endoplasmic reticulum (ER) stress, inserted into ER membranes, with N-terminal DNA-binding and transcription activation domains oriented toward the cytosolic face of the membrane. In response to ER stress, transported to the Golgi, where it is cleaved in a site-specific manner by resident proteases S1P/MBTPS1 and S2P/MBTPS2. The released N-terminal cytosolic domain is translocated to the nucleus to effect transcription of specific target genes. Plays a critical role in chondrogenesis by activating the transcription of SEC23A, which promotes the transport and secretion of cartilage matrix proteins, and possibly that of ER biogenesis-related genes. In a neuroblastoma cell line, protects cells from ER stress-induced death. In vitro activates transcription of target genes via direct binding to the CRE site. This is Cyclic AMP-responsive element-binding protein 3-like protein 2 (CREB3L2) from Pongo abelii (Sumatran orangutan).